Reading from the N-terminus, the 840-residue chain is Phosphatidylglycerol lysyltransferase (840 aa).

Over 1-8 the chain is Cytoplasmic; it reads MTEELKNR. Residues 9–29 form a helical membrane-spanning segment; that stretch reads LLSILKFVFAAVLFIAVVATL. At 30–52 the chain is on the extracellular side; sequence YHELAHINFKQTLEAFSKINRWY. A helical transmembrane segment spans residues 53–73; that stretch reads LVGLFICGGSAMILLSLYDLI. Residues 74 to 89 lie on the Cytoplasmic side of the membrane; the sequence is LVKGLKLDIPLIRVFK. Residues 90-110 traverse the membrane as a helical segment; the sequence is ISYIINALNAIVGFGGFIGAG. The Extracellular segment spans residues 111-129; sequence FRAFIYKNYTTDRKKLVHA. A helical transmembrane segment spans residues 130–150; it reads ISIILISMLMGLSLLSILVVL. The Cytoplasmic segment spans residues 151–167; that stretch reads HIFDASHIINKVSWVRW. A helical transmembrane segment spans residues 168–188; the sequence is ILYVVALFLPLFIAYTMINPI. Topologically, residues 189–193 are extracellular; it reads DRNNK. Residues 194-216 traverse the membrane as a helical segment; that stretch reads YLGVYCTLVSSFEWLAAATVLYL. The Cytoplasmic portion of the chain corresponds to 217–229; the sequence is STVIVDINIAFTT. Residues 230 to 250 traverse the membrane as a helical segment; it reads VIGIFIIAALSGLVSFIPGGF. Over 251-271 the chain is Extracellular; that stretch reads GAFDLVVLLGLKSLGVPEEKV. Residues 272–292 traverse the membrane as a helical segment; sequence LLALLLYRFAYYFVPVIIALI. Residues 293–335 lie on the Cytoplasmic side of the membrane; that stretch reads LSTFEFGSSARKYFEESKYFVPARDVTSFLFSYQKDIIAKIPS. The helical transmembrane segment at 336-356 threads the bilayer; sequence FALATLVLITSFVFFINNITI. Over 357 to 366 the chain is Extracellular; sequence VYDGLYDDHH. Residues 367 to 387 traverse the membrane as a helical segment; sequence FAYYIMLSVHTSACLLLLINV. At 388 to 394 the chain is on the cytoplasmic side; it reads RGVFKQS. 2 helical membrane-spanning segments follow: residues 395 to 415 and 416 to 436; these read RRAI…TIYT and YASL…ILAY. Topologically, residues 437–450 are cytoplasmic; sequence RRSKVMKRPFRLKR. A helical membrane pass occupies residues 451-471; sequence LIFTIILSMLVLYVNHFIISE. At 472–490 the chain is on the extracellular side; the sequence is TLYALDIYHIEMDTSLLKY. Residues 491-511 traverse the membrane as a helical segment; the sequence is YFWLTILVVVILVGIVAWLLG. The Cytoplasmic segment spans residues 512–840; sequence SRYTRPHQLE…LKVMRVIRHK (329 aa).

It belongs to the LPG synthase family.

Its subcellular location is the cell membrane. The enzyme catalyses L-lysyl-tRNA(Lys) + a 1,2-diacyl-sn-glycero-3-phospho-(1'-sn-glycerol) = a 1,2-diacyl-sn-glycero-3-phospho-1'-(3'-O-L-lysyl)-sn-glycerol + tRNA(Lys). Functionally, catalyzes the transfer of a lysyl group from L-lysyl-tRNA(Lys) to membrane-bound phosphatidylglycerol (PG), which produces lysylphosphatidylglycerol (LPG), a major component of the bacterial membrane with a positive net charge. LPG synthesis contributes to bacterial virulence as it is involved in the resistance mechanism against cationic antimicrobial peptides (CAMP) produces by the host's immune system (defensins, cathelicidins) and by the competing microorganisms (bacteriocins). In fact, the modification of anionic phosphatidylglycerol with positively charged L-lysine results in repulsion of the peptides. The sequence is that of Phosphatidylglycerol lysyltransferase (mprF) from Staphylococcus haemolyticus (strain JCSC1435).